The following is a 265-amino-acid chain: tRNA pseudouridine synthase A (265 aa).

The Nucleophile role is filled by Asp-58. Residue Tyr-116 participates in substrate binding.

Belongs to the tRNA pseudouridine synthase TruA family. As to quaternary structure, homodimer.

It catalyses the reaction uridine(38/39/40) in tRNA = pseudouridine(38/39/40) in tRNA. In terms of biological role, formation of pseudouridine at positions 38, 39 and 40 in the anticodon stem and loop of transfer RNAs. The chain is tRNA pseudouridine synthase A from Neisseria meningitidis serogroup C (strain 053442).